The chain runs to 359 residues: S-geranylgeranyl-glutathione receptor P2RY8 (359 aa).

Residues 1 to 19 (MQVPNSTGPDNATLQMLRN) lie on the Extracellular side of the membrane. Residues asparagine 5 and asparagine 11 are each glycosylated (N-linked (GlcNAc...) asparagine). The helical transmembrane segment at 20–40 (PAIAVALPVVYSLVAAVSIPG) threads the bilayer. The Cytoplasmic segment spans residues 41–57 (NLFSLWVLCRRMGPRSP). The chain crosses the membrane as a helical span at residues 58 to 78 (SVIFMINLSVTDLMLASVLPF). Topologically, residues 79–88 (QIYYHCNRHH) are extracellular. The chain crosses the membrane as a helical span at residues 89-109 (WVFGVLLCNVVTVAFYANMYS). The Cytoplasmic segment spans residues 110–138 (SILTMTCISVERFLGVLYPLSSKRWRRRR). The helical transmembrane segment at 139–159 (YAVAACAGTWLLLLTALSPLA) threads the bilayer. Topologically, residues 160–187 (RTDLTYPVHALGIITCFDVLKWTMLPSV) are extracellular. Residues 188–208 (AMWAVFLFTIFILLFLIPFVI) traverse the membrane as a helical segment. Residues 209–237 (TVACYTATILKLLRTEEAHGREQRRRAVG) lie on the Cytoplasmic side of the membrane. Residues 238–258 (LAAVVLLAFVTCFAPNNFVLL) traverse the membrane as a helical segment. Over 259 to 275 (AHIVSRLFYGKSYYHVY) the chain is Extracellular. A helical transmembrane segment spans residues 276–296 (KLTLCLSCLNNCLDPFVYYFA). The Cytoplasmic portion of the chain corresponds to 297–359 (SREFQLRLRE…PGLQRQESVF (63 aa)). The disordered stretch occupies residues 329–359 (RTTSVRSEAGAHPEGMEGATRPGLQRQESVF).

The protein belongs to the G-protein coupled receptor 1 family. Barely detectable in normal blood leukocytes. Weaker expression was seen in heart, kidney and lung. Not detected in brain. Expressed in B cells and follicular helper T cells in germinal centers (at protein level).

Its subcellular location is the cell membrane. In terms of biological role, g protein-coupled receptor for S-geranylgeranyl-glutathione (GGG), an endogenous metabolite present in lymphoid tissues. Couples the binding of GGG to the activation of GNA13 and downstream repression of AKT activation in lymphocytes defining their positioning and growth within lymphoid organs. In lymphoid follicles, confines B cells and follicular helper T cells in germinal centers (GCs) in response to GGG local gradients established by GGT5 (via GGG catabolism) and ABCC1 (via extracellular transport) with lower concentrations of GGG found in the follicular dendritic cell network region around which germinal centers are formed. In the bone marrow, also in response to GGG gradients established by GGT5 and ABCC1, it restricts chemotactic transmigration of B cells, T cells and NK cells from blood vessels to the bone marrow parenchyma. Contributes to GNA13-dependent pathway that suppresses GC B cell growth. The polypeptide is S-geranylgeranyl-glutathione receptor P2RY8 (Homo sapiens (Human)).